A 211-amino-acid polypeptide reads, in one-letter code: Protein-methionine-sulfoxide reductase heme-binding subunit MsrQ (211 aa).

A run of 4 helical transmembrane segments spans residues tryptophan 10–isoleucine 30, leucine 82–valine 102, proline 116–threonine 136, and phenylalanine 153–serine 173.

This sequence belongs to the MsrQ family. Heterodimer of a catalytic subunit (MsrP) and a heme-binding subunit (MsrQ). FMN is required as a cofactor. The cofactor is heme b.

The protein resides in the cell inner membrane. In terms of biological role, part of the MsrPQ system that repairs oxidized periplasmic proteins containing methionine sulfoxide residues (Met-O), using respiratory chain electrons. Thus protects these proteins from oxidative-stress damage caused by reactive species of oxygen and chlorine generated by the host defense mechanisms. MsrPQ is essential for the maintenance of envelope integrity under bleach stress, rescuing a wide series of structurally unrelated periplasmic proteins from methionine oxidation, including the primary periplasmic chaperone SurA and the lipoprotein Pal. MsrQ provides electrons for reduction to the reductase catalytic subunit MsrP, using the quinone pool of the respiratory chain. This Escherichia coli O157:H7 protein is Protein-methionine-sulfoxide reductase heme-binding subunit MsrQ.